The chain runs to 344 residues: Oxygen sensor histidine kinase NreB (344 aa).

4 residues coordinate [4Fe-4S] cluster: Cys58, Cys61, Cys73, and Cys76. A Histidine kinase domain is found at 152–344 (RISRELHDSV…GTNVTLNIPI (193 aa)). His158 carries the post-translational modification Phosphohistidine; by autocatalysis.

[4Fe-4S] cluster serves as cofactor. Post-translationally, autophosphorylated.

The protein localises to the cytoplasm. The catalysed reaction is ATP + protein L-histidine = ADP + protein N-phospho-L-histidine.. In terms of biological role, member of the two-component regulatory system NreB/NreC involved in the control of dissimilatory nitrate/nitrite reduction in response to oxygen. NreB functions as a direct oxygen sensor histidine kinase which is autophosphorylated, in the absence of oxygen, probably at the conserved histidine residue, and transfers its phosphate group probably to a conserved aspartate residue of NreC. NreB/NreC activates the expression of the nitrate (narGHJI) and nitrite (nir) reductase operons, as well as the putative nitrate transporter gene narT. This Staphylococcus aureus (strain Mu3 / ATCC 700698) protein is Oxygen sensor histidine kinase NreB (nreB).